A 710-amino-acid chain; its full sequence is mRNA export factor crp79 (710 aa).

2 RRM domains span residues Ile-19–Ile-102 and His-222–Pro-292. Over residues Gln-333–His-348 the composition is skewed to polar residues. The interval Gln-333–Lys-357 is disordered. One can recognise an RRM 3 domain in the interval Glu-401–Phe-474. Polar residues predominate over residues Thr-502–Lys-524. The disordered stretch occupies residues Thr-502–Glu-544. Over residues Val-525 to Glu-538 the composition is skewed to basic and acidic residues.

Its subcellular location is the cytoplasm. It is found in the nucleus. Functionally, binds the poly(A) tail of mRNA. Involved in the export of mRNA from the nucleus to the cytoplasm. The sequence is that of mRNA export factor crp79 (crp79) from Schizosaccharomyces pombe (strain 972 / ATCC 24843) (Fission yeast).